Reading from the N-terminus, the 227-residue chain is MAHAAQVGLQDATSPIMEELIIFHDHALMIIFLICFLVLYALFLTLTTKLTNTSISDAQEMETVWTILPAIILVLIALPSLRILYMTDEVNDPSFTIKSIGHQWYWTYEYTDYGGLIFNSYMLPPLFLEPGDLRLLDVDNRLVLPVEAPVRMMITSQDVLHSWAVPTLGLKTDAIPGRLNQTTFTATRPGVYYGQCSEICGANHSFMPIVLELIPLKIFEMGPVFTL.

The Mitochondrial intermembrane portion of the chain corresponds to 1 to 14 (MAHAAQVGLQDATS). The chain crosses the membrane as a helical span at residues 15 to 45 (PIMEELIIFHDHALMIIFLICFLVLYALFLT). Residues 46–59 (LTTKLTNTSISDAQ) are Mitochondrial matrix-facing. The helical transmembrane segment at 60 to 87 (EMETVWTILPAIILVLIALPSLRILYMT) threads the bilayer. The Mitochondrial intermembrane segment spans residues 88–227 (DEVNDPSFTI…IFEMGPVFTL (140 aa)). Residues His161, Cys196, Glu198, Cys200, His204, and Met207 each contribute to the Cu cation site. Glu198 is a Mg(2+) binding site.

It belongs to the cytochrome c oxidase subunit 2 family. As to quaternary structure, component of the cytochrome c oxidase (complex IV, CIV), a multisubunit enzyme composed of 14 subunits. The complex is composed of a catalytic core of 3 subunits MT-CO1, MT-CO2 and MT-CO3, encoded in the mitochondrial DNA, and 11 supernumerary subunits COX4I, COX5A, COX5B, COX6A, COX6B, COX6C, COX7A, COX7B, COX7C, COX8 and NDUFA4, which are encoded in the nuclear genome. The complex exists as a monomer or a dimer and forms supercomplexes (SCs) in the inner mitochondrial membrane with NADH-ubiquinone oxidoreductase (complex I, CI) and ubiquinol-cytochrome c oxidoreductase (cytochrome b-c1 complex, complex III, CIII), resulting in different assemblies (supercomplex SCI(1)III(2)IV(1) and megacomplex MCI(2)III(2)IV(2)). Found in a complex with TMEM177, COA6, COX18, COX20, SCO1 and SCO2. Interacts with TMEM177 in a COX20-dependent manner. Interacts with COX20. Interacts with COX16. Cu cation is required as a cofactor.

It is found in the mitochondrion inner membrane. The enzyme catalyses 4 Fe(II)-[cytochrome c] + O2 + 8 H(+)(in) = 4 Fe(III)-[cytochrome c] + 2 H2O + 4 H(+)(out). Functionally, component of the cytochrome c oxidase, the last enzyme in the mitochondrial electron transport chain which drives oxidative phosphorylation. The respiratory chain contains 3 multisubunit complexes succinate dehydrogenase (complex II, CII), ubiquinol-cytochrome c oxidoreductase (cytochrome b-c1 complex, complex III, CIII) and cytochrome c oxidase (complex IV, CIV), that cooperate to transfer electrons derived from NADH and succinate to molecular oxygen, creating an electrochemical gradient over the inner membrane that drives transmembrane transport and the ATP synthase. Cytochrome c oxidase is the component of the respiratory chain that catalyzes the reduction of oxygen to water. Electrons originating from reduced cytochrome c in the intermembrane space (IMS) are transferred via the dinuclear copper A center (CU(A)) of subunit 2 and heme A of subunit 1 to the active site in subunit 1, a binuclear center (BNC) formed by heme A3 and copper B (CU(B)). The BNC reduces molecular oxygen to 2 water molecules using 4 electrons from cytochrome c in the IMS and 4 protons from the mitochondrial matrix. This is Cytochrome c oxidase subunit 2 (MT-CO2) from Pan paniscus (Pygmy chimpanzee).